The primary structure comprises 369 residues: UDP-3-O-acylglucosamine N-acyltransferase (369 aa).

The active-site Proton acceptor is the His-252. Residues Glu-348–Ser-369 are disordered.

Belongs to the transferase hexapeptide repeat family. LpxD subfamily. As to quaternary structure, homotrimer.

It carries out the reaction a UDP-3-O-[(3R)-3-hydroxyacyl]-alpha-D-glucosamine + a (3R)-hydroxyacyl-[ACP] = a UDP-2-N,3-O-bis[(3R)-3-hydroxyacyl]-alpha-D-glucosamine + holo-[ACP] + H(+). The protein operates within bacterial outer membrane biogenesis; LPS lipid A biosynthesis. Catalyzes the N-acylation of UDP-3-O-acylglucosamine using 3-hydroxyacyl-ACP as the acyl donor. Is involved in the biosynthesis of lipid A, a phosphorylated glycolipid that anchors the lipopolysaccharide to the outer membrane of the cell. This Cupriavidus metallidurans (strain ATCC 43123 / DSM 2839 / NBRC 102507 / CH34) (Ralstonia metallidurans) protein is UDP-3-O-acylglucosamine N-acyltransferase.